Consider the following 117-residue polypeptide: Photosystem II reaction center Psb28 protein (117 aa).

The protein belongs to the Psb28 family. In terms of assembly, part of the photosystem II complex.

Its subcellular location is the cellular thylakoid membrane. The chain is Photosystem II reaction center Psb28 protein from Prochlorococcus marinus subsp. pastoris (strain CCMP1986 / NIES-2087 / MED4).